The following is a 7192-amino-acid chain: Nonribosomal peptide synthetase gloA (7192 aa).

The span at 1-48 shows a compositional bias: polar residues; that stretch reads MTPSRSLENGEKQMNWNESPQTASPKNVLRDSNSNGNYVNGHGTNING. The interval 1-52 is disordered; that stretch reads MTPSRSLENGEKQMNWNESPQTASPKNVLRDSNSNGNYVNGHGTNINGDGSD. Positions 105 to 181 constitute a Carrier 1 domain; the sequence is HSTSKFKEEF…GLFATANFRP (77 aa). Serine 142 carries the O-(pantetheine 4'-phosphoryl)serine modification. Residues 239 to 634 form a condensation 1 region; it reads EDVYPCTPLQ…TYTVQCLCNP (396 aa). An adenylation 1 region spans residues 675–1047; the sequence is QDQVNIQPAK…SLMYLGRCDS (373 aa). Residues 1190 to 1266 enclose the Carrier 2 domain; it reads APSTDAEKQV…DLAFVIQRRL (77 aa). Serine 1227 carries the O-(pantetheine 4'-phosphoryl)serine modification. Positions 1316–1736 are condensation 2; sequence EDIYPCTPLQ…MSWLSDYDEE (421 aa). The segment at 1758–2154 is adenylation 2; that stretch reads QEQTKLRPNA…GRRDTQIKIR (397 aa). The 77-residue stretch at 2288–2364 folds into the Carrier 3 domain; it reads APSTREECLV…ELAELLAKRS (77 aa). Serine 2325 is subject to O-(pantetheine 4'-phosphoryl)serine. Residues 2407 to 2829 are condensation 3; it reads VEDVYPCTPL…LIAPEDQEQI (423 aa). Positions 2849–3245 are adenylation 3; the sequence is YKQVMARPQA…GRRDDQIKIR (397 aa). One can recognise a Carrier 4 domain in the interval 3378 to 3455; the sequence is TPSTKMEKVI…DLASVMTEHR (78 aa). Residue serine 3415 is modified to O-(pantetheine 4'-phosphoryl)serine. Residues 3502-3891 form a condensation 4 region; that stretch reads EDIYPCTALQ…NGVLDQFVYI (390 aa). Residues 3920–4320 form an adenylation 4 region; it reads QEQALARPTA…ARRDMQVKIR (401 aa). Residues 4453–4529 enclose the Carrier 5 domain; sequence LPSTQVELQL…ELAVILDGRK (77 aa). Residue serine 4490 is modified to O-(pantetheine 4'-phosphoryl)serine. Residues 4574–4971 form a condensation 5 region; it reads EDIYPCTPLQ…QFEYVVQKFH (398 aa). Residues 5013–5414 form an adenylation 5 region; sequence DDHVAARPMA…GRQDLQVKIR (402 aa). Residues 5551-5627 form the Carrier 6 domain; it reads APDTDLGRLI…DLVNTLSNRS (77 aa). O-(pantetheine 4'-phosphoryl)serine is present on serine 5588. Positions 5674-6071 are condensation 6; the sequence is EDVYPSTPLQ…CVVQRILTQS (398 aa). The interval 6111–6507 is adenylation 6; sequence QAQVKKSPAA…GRRDLQVKIR (397 aa). A Carrier 7 domain is found at 6645-6721; that stretch reads NPSTTMERQL…DLAVVLTDRL (77 aa). Residue serine 6682 is modified to O-(pantetheine 4'-phosphoryl)serine. The condensation 7 stretch occupies residues 6795 to 7178; it reads NGPCDTRALK…NPLSPVKQVL (384 aa).

It belongs to the NRP synthetase family.

Its pathway is mycotoxin biosynthesis. Nonribosomal peptide synthetase; part of the gene cluster that mediates the biosynthesis of pneumocandins, lipohexapeptides of the echinocandin family that prevent fungal cell wall formation by non-competitive inhibition of beta-1,3-glucan synthase. The 10,12-dimethylmyristoyl side chain is synthesized by the reducing polyketide synthase gloL/GLPKS4. The thioesterase gloN/GLHYD exclusively interacts with gloL/GLPKS4 to maintain turnover of the polyketide side chain. The 10R,12S-dimethylmyristic acid is then transferred to the first thiolation domain of the nonribosomal peptide synthetase gloA/GLNRPS4 by the acyl-AMP ligase gloD/GLligase, followed by its acylation to L-ornithine to trigger elongation of the cyclic hexapeptide. L-ornithine, 4R-hydroxyl-L-proline (generated from L-proline by the dioxygenase gloF/GLOXY2), 3S-hydroxyl-L-homotyrosine (generated by gloG/GLHtyB, gloH/GLHtyA, gloI/GLHtyC, gloJ/GLHtyD and hydroxylated at C-3 by the dioxygenase gloM/GLOXY1), 3R-hydroxyl-L-glutamine (generated from L-glutamine probably by the dioxygenase gloE/GLOXY3) and 3S-hydroxyl-L-proline (generated from L-proline by the dioxygenase gloF/GLOXY2 to yield pneumocandin B0), or 3S-hydroxyl-4S-methyl-L-proline (generated from L-leucine by the dioxygenase gloC/GLOXY4 to yield pneumocandin A0) are sequentially added to the growing chain. The last C domain of gloA/GLNRPS4 is proposed to be responsible for cyclization by condensation to form the peptide bond between L-ornithine and 3S-hydroxyl-4S-methyl-L-proline (for pneumocandin A0) or 3S-hydroxyl-L-proline (for pneumocandin B0). Finally, the subsequent C-4 hydroxylation of 3S-hydroxyl-L-homotyrosine and L-ornithine dihydroxylation at C-4 and C-5 are performed by the cytochrome P450 monooxygenases gloP/GLP450-1 and gloO/GLP450-2, respectively. The sequence is that of Nonribosomal peptide synthetase gloA from Glarea lozoyensis (strain ATCC 20868 / MF5171).